A 616-amino-acid polypeptide reads, in one-letter code: Sodium- and chloride-dependent transporter XTRP3 (616 aa).

Residues methionine 1–arginine 11 are compositionally biased toward basic residues. The segment at methionine 1–glutamate 26 is disordered. The Cytoplasmic portion of the chain corresponds to methionine 1–glutamine 37. Residues glycine 16–glutamate 26 show a composition bias toward basic and acidic residues. A helical membrane pass occupies residues phenylalanine 38–leucine 58. The Extracellular portion of the chain corresponds to cysteine 59–serine 66. The helical transmembrane segment at phenylalanine 67–leucine 87 threads the bilayer. The Cytoplasmic portion of the chain corresponds to alanine 88–threonine 103. A helical membrane pass occupies residues isoleucine 104–methionine 124. At tyrosine 125–glycine 189 the chain is on the extracellular side. Asparagine 155 is a glycosylation site (N-linked (GlcNAc...) asparagine). Residues valine 190 to leucine 210 traverse the membrane as a helical segment. At arginine 211–lysine 218 the chain is on the cytoplasmic side. The chain crosses the membrane as a helical span at residues valine 219–leucine 239. Residues threonine 240 to tryptophan 265 are Extracellular-facing. Residues isoleucine 266–phenylalanine 286 traverse the membrane as a helical segment. Residues alanine 287 to alanine 300 are Cytoplasmic-facing. Residues valine 301–isoleucine 321 form a helical membrane-spanning segment. The Extracellular portion of the chain corresponds to tyrosine 322–glutamine 413. Asparagine 381 carries N-linked (GlcNAc...) asparagine glycosylation. Residues leucine 414–asparagine 434 traverse the membrane as a helical segment. Topologically, residues threonine 435 to glutamate 455 are cytoplasmic. The chain crosses the membrane as a helical span at residues alanine 456–alanine 476. Over glycine 477 to alanine 489 the chain is Extracellular. The chain crosses the membrane as a helical span at residues threonine 490–leucine 510. Over arginine 511 to tryptophan 533 the chain is Cytoplasmic. A helical membrane pass occupies residues alanine 534–leucine 554. Over threonine 555–histidine 578 the chain is Extracellular. The chain crosses the membrane as a helical span at residues alanine 579–leucine 599. Over glycine 600–alanine 616 the chain is Cytoplasmic.

Belongs to the sodium:neurotransmitter symporter (SNF) (TC 2.A.22) family. SLC6A20 subfamily. In terms of tissue distribution, highly expressed in epithelial cells of duodenum, jejunum, ileum, stomach, cecum, colon and kidney proximal tubule. Also expressed in the choroid plexus, microglia and meniges of the brain and in the ovary.

Its subcellular location is the apical cell membrane. The enzyme catalyses L-proline(out) + chloride(out) + 2 Na(+)(out) = L-proline(in) + chloride(in) + 2 Na(+)(in). It carries out the reaction 4-hydroxy-L-proline(out) + chloride(out) + 2 Na(+)(out) = 4-hydroxy-L-proline(in) + chloride(in) + 2 Na(+)(in). The catalysed reaction is 2-methyl-2-(methylamino)propanoate(out) + chloride(out) + 2 Na(+)(out) = 2-methyl-2-(methylamino)propanoate(in) + chloride(in) + 2 Na(+)(in). It catalyses the reaction L-pipecolate(out) + chloride(out) + 2 Na(+)(out) = L-pipecolate(in) + chloride(in) + 2 Na(+)(in). The enzyme catalyses glycine betaine(out) + chloride(out) + 2 Na(+)(out) = glycine betaine(in) + chloride(in) + 2 Na(+)(in). It carries out the reaction glycine(out) + chloride(out) + 2 Na(+)(out) = glycine(in) + chloride(in) + 2 Na(+)(in). In terms of biological role, mediates the Na(+)- and Cl(-)-dependent uptake of imino acids such as L-proline, N-methyl-L-proline and pipecolate as well as N-methylated amino acids. Also transports glycine, regulates proline and glycine homeostasis in the brain playing a role in the modulation of NMDAR currents. The protein is Sodium- and chloride-dependent transporter XTRP3 of Rattus norvegicus (Rat).